A 763-amino-acid polypeptide reads, in one-letter code: Autophagy-related protein 18f (763 aa).

WD repeat units follow at residues 345 to 385 (AHKS…STSR) and 402 to 441 (FTNA…EGDA). Over residues 701 to 711 (NESIQSPSTTT) the composition is skewed to polar residues. The disordered stretch occupies residues 701 to 763 (NESIQSPSTT…SEDEDEEQVD (63 aa)). 2 stretches are compositionally biased toward basic and acidic residues: residues 712-725 (QDDK…HGTE) and 741-754 (PVDK…KNHS).

The protein belongs to the WD repeat PROPPIN family. Component of the PI(3,5)P2 regulatory complex at least composed of ATG18, SAC/FIG4, FAB1 and VAC14. As to expression, expressed in roots, flowers and leaves.

It localises to the preautophagosomal structure membrane. It is found in the vacuole membrane. The PI(3,5)P2 regulatory complex regulates both the synthesis and turnover of phosphatidylinositol 3,5-bisphosphate (PtdIns(3,5)P2). Required for autophagy. This chain is Autophagy-related protein 18f (ATG18F), found in Arabidopsis thaliana (Mouse-ear cress).